Reading from the N-terminus, the 508-residue chain is Cobyric acid synthase (508 aa).

Residues 266 to 464 (SLRIAVVAYP…AHGLFESTEV (199 aa)) form the GATase cobBQ-type domain. Cys-347 functions as the Nucleophile in the catalytic mechanism. His-456 is a catalytic residue.

Belongs to the CobB/CobQ family. CobQ subfamily.

Its pathway is cofactor biosynthesis; adenosylcobalamin biosynthesis. Catalyzes amidations at positions B, D, E, and G on adenosylcobyrinic A,C-diamide. NH(2) groups are provided by glutamine, and one molecule of ATP is hydrogenolyzed for each amidation. The protein is Cobyric acid synthase of Methylibium petroleiphilum (strain ATCC BAA-1232 / LMG 22953 / PM1).